The chain runs to 318 residues: Biotin synthase (318 aa).

Residues 44 to 273 (LCGNKFDLCT…TVQIRLAGGR (230 aa)) enclose the Radical SAM core domain. Residues cysteine 62, cysteine 66, and cysteine 69 each coordinate [4Fe-4S] cluster. Serine 106, cysteine 138, cysteine 198, and arginine 268 together coordinate [2Fe-2S] cluster.

Belongs to the radical SAM superfamily. Biotin synthase family. In terms of assembly, homodimer. [4Fe-4S] cluster is required as a cofactor. The cofactor is [2Fe-2S] cluster.

It catalyses the reaction (4R,5S)-dethiobiotin + (sulfur carrier)-SH + 2 reduced [2Fe-2S]-[ferredoxin] + 2 S-adenosyl-L-methionine = (sulfur carrier)-H + biotin + 2 5'-deoxyadenosine + 2 L-methionine + 2 oxidized [2Fe-2S]-[ferredoxin]. The protein operates within cofactor biosynthesis; biotin biosynthesis; biotin from 7,8-diaminononanoate: step 2/2. In terms of biological role, catalyzes the conversion of dethiobiotin (DTB) to biotin by the insertion of a sulfur atom into dethiobiotin via a radical-based mechanism. The polypeptide is Biotin synthase (Clostridium botulinum (strain Hall / ATCC 3502 / NCTC 13319 / Type A)).